Consider the following 252-residue polypeptide: Phosphate import ATP-binding protein PstB (252 aa).

The ABC transporter domain occupies 5 to 247 (VKIDKLNVHF…PEKKQTEDYI (243 aa)). 37–44 (GPSGCGKS) is an ATP binding site.

The protein belongs to the ABC transporter superfamily. Phosphate importer (TC 3.A.1.7) family. The complex is composed of two ATP-binding proteins (PstB), two transmembrane proteins (PstC and PstA) and a solute-binding protein (PstS).

It localises to the cell inner membrane. The enzyme catalyses phosphate(out) + ATP + H2O = ADP + 2 phosphate(in) + H(+). Functionally, part of the ABC transporter complex PstSACB involved in phosphate import. Responsible for energy coupling to the transport system. The chain is Phosphate import ATP-binding protein PstB from Geobacter metallireducens (strain ATCC 53774 / DSM 7210 / GS-15).